Here is a 411-residue protein sequence, read N- to C-terminus: Putative binding protein BRA0748/BS1330_II0741 (411 aa).

The N-terminal stretch at 1–25 (MLIRKWKAGLLAGLSILALASSADA) is a signal peptide.

The protein belongs to the bacterial solute-binding protein 1 family. In terms of assembly, the complex is composed of two ATP-binding proteins (BRA0745), two transmembrane proteins (BRA0749) and a solute-binding protein (BRA0748).

Its subcellular location is the periplasm. In terms of biological role, probably part of an ABC transporter complex. The sequence is that of Putative binding protein BRA0748/BS1330_II0741 from Brucella suis biovar 1 (strain 1330).